Consider the following 283-residue polypeptide: Elongation factor Ts (283 aa).

An involved in Mg(2+) ion dislocation from EF-Tu region spans residues 80–83 (TDFV).

This sequence belongs to the EF-Ts family.

Its subcellular location is the cytoplasm. Its function is as follows. Associates with the EF-Tu.GDP complex and induces the exchange of GDP to GTP. It remains bound to the aminoacyl-tRNA.EF-Tu.GTP complex up to the GTP hydrolysis stage on the ribosome. The sequence is that of Elongation factor Ts from Actinobacillus pleuropneumoniae serotype 5b (strain L20).